The chain runs to 151 residues: Deoxyuridine 5'-triphosphate nucleotidohydrolase (151 aa).

Residues 70 to 72, Asn-83, 87 to 89, and Met-97 each bind substrate; these read RSG and LID.

The protein belongs to the dUTPase family. Requires Mg(2+) as cofactor.

The enzyme catalyses dUTP + H2O = dUMP + diphosphate + H(+). Its pathway is pyrimidine metabolism; dUMP biosynthesis; dUMP from dCTP (dUTP route): step 2/2. Functionally, this enzyme is involved in nucleotide metabolism: it produces dUMP, the immediate precursor of thymidine nucleotides and it decreases the intracellular concentration of dUTP so that uracil cannot be incorporated into DNA. This chain is Deoxyuridine 5'-triphosphate nucleotidohydrolase, found in Pseudomonas putida (strain ATCC 700007 / DSM 6899 / JCM 31910 / BCRC 17059 / LMG 24140 / F1).